A 34-amino-acid polypeptide reads, in one-letter code: Photosystem II reaction center protein Psb30 (34 aa).

Residues 6 to 26 (VIGQLVSTGAIMLLGPAIIIL) traverse the membrane as a helical segment.

Belongs to the Psb30/Ycf12 family. In terms of assembly, PSII is composed of 1 copy each of membrane proteins PsbA, PsbB, PsbC, PsbD, PsbE, PsbF, PsbH, PsbI, PsbJ, PsbK, PsbL, PsbM, PsbT, PsbX, PsbY, PsbZ, Psb30/Ycf12, peripheral proteins of the oxygen-evolving complex and a large number of cofactors. It forms dimeric complexes.

It is found in the plastid. The protein localises to the chloroplast thylakoid membrane. A core subunit of photosystem II (PSII), probably helps stabilize the reaction center. The chain is Photosystem II reaction center protein Psb30 from Thalassiosira pseudonana (Marine diatom).